Here is a 304-residue protein sequence, read N- to C-terminus: UPF0282 protein TSIB_1029 (304 aa).

The protein belongs to the UPF0282 family.

The sequence is that of UPF0282 protein TSIB_1029 from Thermococcus sibiricus (strain DSM 12597 / MM 739).